A 423-amino-acid chain; its full sequence is UPF0229 protein Pmen_4018 (423 aa).

The segment at H65 to E108 is disordered.

The protein belongs to the UPF0229 family.

In Ectopseudomonas mendocina (strain ymp) (Pseudomonas mendocina), this protein is UPF0229 protein Pmen_4018.